The primary structure comprises 485 residues: Elongation factor TuB, chloroplastic (485 aa).

The N-terminal 76 residues, 1 to 76 (MASISAASAT…TTHPRRFTVR (76 aa)), are a transit peptide targeting the chloroplast. Residues 86–290 (KPHVNIGTIG…NVDEYIPIPQ (205 aa)) form the tr-type G domain. The interval 95–102 (GHVDHGKT) is G1. Position 95–102 (95–102 (GHVDHGKT)) interacts with GTP. The tract at residues 136 to 140 (GITIN) is G2. The segment at 157–160 (DCPG) is G3. GTP is bound by residues 157–161 (DCPGH) and 212–215 (NKQD). The segment at 212–215 (NKQD) is G4. Residues 250–252 (SAL) form a G5 region.

This sequence belongs to the TRAFAC class translation factor GTPase superfamily. Classic translation factor GTPase family. EF-Tu/EF-1A subfamily.

The protein resides in the plastid. It localises to the chloroplast. In terms of biological role, this protein promotes the GTP-dependent binding of aminoacyl-tRNA to the A-site of ribosomes during protein biosynthesis. This is Elongation factor TuB, chloroplastic (TUFB) from Nicotiana sylvestris (Wood tobacco).